The chain runs to 644 residues: Acetyl-coenzyme A synthetase (644 aa).

CoA-binding positions include 189 to 192 and Thr-307; that span reads RGGK. ATP contacts are provided by residues 383–385, 407–412, Asp-496, and Arg-511; these read GEP and DTWWQT. Ser-519 is a binding site for CoA. Arg-522 is a binding site for ATP. Mg(2+) contacts are provided by Val-533, His-535, and Val-538. Arg-580 contacts CoA. Lys-605 bears the N6-acetyllysine mark.

It belongs to the ATP-dependent AMP-binding enzyme family. Mg(2+) serves as cofactor. Post-translationally, acetylated. Deacetylation by the SIR2-homolog deacetylase activates the enzyme.

It carries out the reaction acetate + ATP + CoA = acetyl-CoA + AMP + diphosphate. Catalyzes the conversion of acetate into acetyl-CoA (AcCoA), an essential intermediate at the junction of anabolic and catabolic pathways. AcsA undergoes a two-step reaction. In the first half reaction, AcsA combines acetate with ATP to form acetyl-adenylate (AcAMP) intermediate. In the second half reaction, it can then transfer the acetyl group from AcAMP to the sulfhydryl group of CoA, forming the product AcCoA. This is Acetyl-coenzyme A synthetase from Rubrobacter xylanophilus (strain DSM 9941 / JCM 11954 / NBRC 16129 / PRD-1).